Here is a 938-residue protein sequence, read N- to C-terminus: Breast cancer type 2 susceptibility protein homolog (938 aa).

2 stretches are compositionally biased toward basic and acidic residues: residues 320 to 339 (LEPS…ESKI) and 409 to 425 (NSIK…ETPN). 2 disordered regions span residues 320-359 (LEPS…TTVL) and 409-434 (NSIK…SSHQ). BRCA2 repeat units follow at residues 537 to 571 (AEPE…EFQY), 638 to 672 (NEPQ…QSRA), and 713 to 747 (SETE…EFQA). Polar residues predominate over residues 870 to 879 (SSTETSTSCA). The interval 870–938 (SSTETSTSCA…RRLGLSRSRY (69 aa)) is disordered. The span at 898–915 (ADRDLNRSKDCAKNRQDA) shows a compositional bias: basic and acidic residues. Residues 926-938 (KKSRRLGLSRSRY) show a composition bias toward basic residues.

In terms of assembly, interacts with Rad9 and spn-A/Rad51.

The protein resides in the nucleus. Its function is as follows. Involved in and required for double-strand break repair by meiotic and mitotic homologous recombination. During meiosis, has a dual role in the repair of meiotic double-stranded breaks and the efficient activation of the meiotic recombination checkpoint. This chain is Breast cancer type 2 susceptibility protein homolog, found in Drosophila sechellia (Fruit fly).